The chain runs to 304 residues: MHTAPVEIVRAPTEARNSSTKDIDLLPTADILRLINAEDATVPRAVAEVLPELAKAVDLGVSVLRHGGRIHYFGAGTSGRLATMDAAELPPTFGIARDRVVAHHAGGPSALIHACEGIEDDFSSGRADAATVTSADLAIGLTASGRTPYVAGALDRAREAGARTVLVTADPHSALAADVDVHIGVATGAEVIAGSTRMKAGTAQKLILNAFSTAVMVRLGYTYSNLMVGVVATNAKLRGRMVTILTEATGLSEEDCAEALHRADGDTRIALVCLLTGVDVPTAAHALHAAHGSVRAALRELART.

The SIS domain maps to 60 to 221 (GVSVLRHGGR…STAVMVRLGY (162 aa)). E88 functions as the Proton donor in the catalytic mechanism. E119 is a catalytic residue.

The protein belongs to the GCKR-like family. MurNAc-6-P etherase subfamily. As to quaternary structure, homodimer.

It catalyses the reaction N-acetyl-D-muramate 6-phosphate + H2O = N-acetyl-D-glucosamine 6-phosphate + (R)-lactate. It participates in amino-sugar metabolism; N-acetylmuramate degradation. Functionally, specifically catalyzes the cleavage of the D-lactyl ether substituent of MurNAc 6-phosphate, producing GlcNAc 6-phosphate and D-lactate. The chain is N-acetylmuramic acid 6-phosphate etherase from Thermobifida fusca (strain YX).